The primary structure comprises 362 residues: Chorismate synthase (362 aa).

Residues Arg-48 and Arg-54 each contribute to the NADP(+) site. FMN-binding positions include 125 to 127, 238 to 239, Gly-278, 293 to 297, and Arg-319; these read RSS, NA, and KPTSS.

The protein belongs to the chorismate synthase family. As to quaternary structure, homotetramer. Requires FMNH2 as cofactor.

The catalysed reaction is 5-O-(1-carboxyvinyl)-3-phosphoshikimate = chorismate + phosphate. The protein operates within metabolic intermediate biosynthesis; chorismate biosynthesis; chorismate from D-erythrose 4-phosphate and phosphoenolpyruvate: step 7/7. Functionally, catalyzes the anti-1,4-elimination of the C-3 phosphate and the C-6 proR hydrogen from 5-enolpyruvylshikimate-3-phosphate (EPSP) to yield chorismate, which is the branch point compound that serves as the starting substrate for the three terminal pathways of aromatic amino acid biosynthesis. This reaction introduces a second double bond into the aromatic ring system. This chain is Chorismate synthase, found in Aeromonas salmonicida (strain A449).